A 51-amino-acid chain; its full sequence is Large ribosomal subunit protein bL33 (51 aa).

Belongs to the bacterial ribosomal protein bL33 family.

This chain is Large ribosomal subunit protein bL33, found in Colwellia psychrerythraea (strain 34H / ATCC BAA-681) (Vibrio psychroerythus).